The following is a 75-amino-acid chain: Small ribosomal subunit protein bS21A (75 aa).

The protein belongs to the bacterial ribosomal protein bS21 family.

The polypeptide is Small ribosomal subunit protein bS21A (rpsU1) (Agrobacterium fabrum (strain C58 / ATCC 33970) (Agrobacterium tumefaciens (strain C58))).